The chain runs to 230 residues: MIIIGIDEAGRGPVLGPMVVCAFAIEKEREEELKKLGVKDSKELTKNKRAYLKKLLENLGYVEKRILEAEEINQLMNSINLNDIEINAFSKVAKNLIEKLNIRDDEIEIYIDACSTNTKKFEDSFKDKIEDIIKERNLNIKIIAEHKADAKYPVVSAASIIAKAERDEIIDYYKKIYGDIGSGYPSDPKTIKFLEDYFKKHKKLPDIARTHWKTCKRILDKSKQTKLIIE.

Residues 1–224 enclose the RNase H type-2 domain; the sequence is MIIIGIDEAG…CKRILDKSKQ (224 aa). A divalent metal cation contacts are provided by Asp-7, Glu-8, and Asp-112.

This sequence belongs to the RNase HII family. Mn(2+) serves as cofactor. Mg(2+) is required as a cofactor.

It localises to the cytoplasm. It carries out the reaction Endonucleolytic cleavage to 5'-phosphomonoester.. Its function is as follows. Endonuclease that specifically degrades the RNA of RNA-DNA hybrids. The protein is Ribonuclease HII (rnhB) of Methanocaldococcus jannaschii (strain ATCC 43067 / DSM 2661 / JAL-1 / JCM 10045 / NBRC 100440) (Methanococcus jannaschii).